The chain runs to 173 residues: MTTIVCVRKDGKVAIGGDGQATLGNCVEKGTVRKVRRMYKDKVVTGFAGSTADAFILRDLFEKKLELHQGHLIKSAVELAKEWRTERSLRKLEAMMIVANESEFLLVSGSGDVIEPEQDVLAIGSGGNYAKAAALALLRTENNLSAKEIVAEALKIAGDIDIYSNHNHVIEEV.

Thr-2 is an active-site residue. Residues Gly-158, Asp-161, and Ser-164 each coordinate Na(+).

It belongs to the peptidase T1B family. HslV subfamily. As to quaternary structure, a double ring-shaped homohexamer of HslV is capped on each side by a ring-shaped HslU homohexamer. The assembly of the HslU/HslV complex is dependent on binding of ATP.

It is found in the cytoplasm. It carries out the reaction ATP-dependent cleavage of peptide bonds with broad specificity.. Its activity is regulated as follows. Allosterically activated by HslU binding. In terms of biological role, protease subunit of a proteasome-like degradation complex believed to be a general protein degrading machinery. This Actinobacillus pleuropneumoniae serotype 5b (strain L20) protein is ATP-dependent protease subunit HslV.